A 254-amino-acid chain; its full sequence is N-acetylglucosaminyldiphosphoundecaprenol N-acetyl-beta-D-mannosaminyltransferase (254 aa).

Belongs to the glycosyltransferase 26 family. TagA/TarA subfamily.

It carries out the reaction UDP-N-acetyl-alpha-D-mannosamine + N-acetyl-alpha-D-glucosaminyl-di-trans,octa-cis-undecaprenyl diphosphate = N-acetyl-beta-D-mannosaminyl-(1-&gt;4)-N-acetyl-alpha-D-glucosaminyl di-trans,octa-cis-undecaprenyl diphosphate + UDP + H(+). The protein operates within cell wall biogenesis; poly(ribitol phosphate) teichoic acid biosynthesis. Catalyzes the conversion of GlcNAc-PP-undecaprenol into ManNAc-GlcNAc-PP-undecaprenol, the first committed lipid intermediate in the de novo synthesis of teichoic acid. The protein is N-acetylglucosaminyldiphosphoundecaprenol N-acetyl-beta-D-mannosaminyltransferase of Staphylococcus aureus (strain NCTC 8325 / PS 47).